Consider the following 113-residue polypeptide: U11-theraphotoxin-Hhn1a (113 aa).

An N-terminal signal peptide occupies residues 1-21 (MNTVRVTFLLVFVLAVSLGQA). A propeptide spanning residues 22–74 (DKDENRMEMQEKTEQGKGYLDFAENLLPQKLEELEAKLLEEDSEESRNSRQKR) is cleaved from the precursor. Residues 59–69 (LLEEDSEESRN) are compositionally biased toward basic and acidic residues. The interval 59–83 (LLEEDSEESRNSRQKRCIGEGVPCD) is disordered. 3 disulfide bridges follow: cysteine 75–cysteine 90, cysteine 82–cysteine 95, and cysteine 89–cysteine 110.

It belongs to the neurotoxin 14 (magi-1) family. 01 (HNTX-16) subfamily. In terms of tissue distribution, expressed by the venom gland.

The protein resides in the secreted. Probable ion channel inhibitor. This is U11-theraphotoxin-Hhn1a from Cyriopagopus hainanus (Chinese bird spider).